The sequence spans 155 residues: Altered inheritance rate of mitochondria protein 29 (155 aa).

Ser78 carries the phosphoserine modification.

Belongs to the UPF0538 family.

It is found in the cytoplasm. May be involved in mitochondrial organization and biogenesis. The polypeptide is Altered inheritance rate of mitochondria protein 29 (AIM29) (Saccharomyces cerevisiae (strain ATCC 204508 / S288c) (Baker's yeast)).